An 809-amino-acid polypeptide reads, in one-letter code: uncharacterized protein (809 aa).

The MHYT domain maps to 19-206 (HDLRLVLVAS…FTGMSAITIV (188 aa)). A run of 7 helical transmembrane segments spans residues 23 to 43 (LVLVASAVCLAGCFTTFRLYS), 57 to 77 (LLLTGLVAGSSVWATHFIAMV), 92 to 112 (TLLSLMIAALFMASGFAVASA), 122 to 142 (GGVLIGLGVAAMHYMGMSAFV), 152 to 172 (ATVGMSAVLGVGGATAALLLA), 186 to 206 (GMLCLGIVMLHFTGMSAITIV), and 224 to 244 (TLAVGSITSMIILGGLGAVAI). The 64-residue stretch at 254–317 (ERIRRLANAA…ADPSREDVRR (64 aa)) folds into the PAS domain. Residues 402–536 (ESLAVICIDL…GRGVYRFFKR (135 aa)) enclose the GGDEF domain. One can recognise an EAL domain in the interval 545–795 (RRNLARDLRQ…ALTMWTTAGD (251 aa)).

The protein localises to the cell membrane. This is an uncharacterized protein from Caulobacter vibrioides (strain ATCC 19089 / CIP 103742 / CB 15) (Caulobacter crescentus).